The chain runs to 354 residues: Hyaluronan and proteoglycan link protein 1 (354 aa).

A propeptide spanning residues 1 to 9 is cleaved from the precursor; it reads MKSLLLLVL. 2 N-linked (GlcNAc...) asparagine glycosylation sites follow: N21 and N56. In terms of domain architecture, Ig-like V-type spans 38–152; sequence PRLLVEAEQA…EGLEDDTAVV (115 aa). Intrachain disulfides connect C61-C139, C181-C252, C205-C226, C279-C349, and C304-C325. 2 Link domains span residues 159–254 and 259–351; these read VVFP…FCFT and GRFY…YCFR.

It belongs to the HAPLN family.

Its subcellular location is the secreted. It localises to the extracellular space. It is found in the extracellular matrix. In terms of biological role, stabilizes the aggregates of proteoglycan monomers with hyaluronic acid in the extracellular cartilage matrix. This chain is Hyaluronan and proteoglycan link protein 1 (HAPLN1), found in Sus scrofa (Pig).